The primary structure comprises 201 residues: MSRYRGPRVRISRRLGDLPGLSRKAIKRSYPPGEHGQKSRKPSEYAVRLEEKQKLRFNYGLSEKQLFKYVKAAKKLQGSTGQILLQLLEMRLDNTVFRLGMAPTIPAARQLVNHGHICINGQVVSICSYQCKPGESISVKNQEASRKLVENYLAFPGLANIPSHLELNKSNLSGKVNGVIDREWVALQLNELLVIEYYSRK.

Positions 15–45 (LGDLPGLSRKAIKRSYPPGEHGQKSRKPSEY) are disordered. The span at 35 to 45 (HGQKSRKPSEY) shows a compositional bias: basic and acidic residues. An S4 RNA-binding domain is found at 90–153 (MRLDNTVFRL…ASRKLVENYL (64 aa)).

Belongs to the universal ribosomal protein uS4 family. As to quaternary structure, part of the 30S ribosomal subunit. Contacts protein S5. The interaction surface between S4 and S5 is involved in control of translational fidelity.

It localises to the plastid. Its subcellular location is the chloroplast. One of the primary rRNA binding proteins, it binds directly to 16S rRNA where it nucleates assembly of the body of the 30S subunit. Its function is as follows. With S5 and S12 plays an important role in translational accuracy. This chain is Small ribosomal subunit protein uS4c (rps4), found in Pyropia yezoensis (Susabi-nori).